The chain runs to 406 residues: Aminomethyltransferase, mitochondrial (406 aa).

Residues 1 to 29 constitute a mitochondrion transit peptide; it reads MRGGLWQLGQSITRRLAQADKKTIGRRCF. The substrate site is built by Glu-234, Arg-265, and Tyr-403.

It belongs to the GcvT family. As to quaternary structure, the glycine cleavage system is composed of four proteins: P, T, L and H.

The protein resides in the mitochondrion. The catalysed reaction is N(6)-[(R)-S(8)-aminomethyldihydrolipoyl]-L-lysyl-[protein] + (6S)-5,6,7,8-tetrahydrofolate = N(6)-[(R)-dihydrolipoyl]-L-lysyl-[protein] + (6R)-5,10-methylene-5,6,7,8-tetrahydrofolate + NH4(+). In terms of biological role, the glycine cleavage system catalyzes the degradation of glycine. The protein is Aminomethyltransferase, mitochondrial (GDCST) of Solanum tuberosum (Potato).